The chain runs to 198 residues: Recombination protein RecR (198 aa).

A C4-type zinc finger spans residues 58-73; it reads CSVCGNFTDKDPCAIC. The 95-residue stretch at 81-175 folds into the Toprim domain; the sequence is NTICVVEHPK…KVTRIAHGIP (95 aa).

It belongs to the RecR family.

Its function is as follows. May play a role in DNA repair. It seems to be involved in an RecBC-independent recombinational process of DNA repair. It may act with RecF and RecO. The chain is Recombination protein RecR from Clostridium tetani (strain Massachusetts / E88).